The primary structure comprises 422 residues: Serine protease HTRA2, mitochondrial (422 aa).

Residues 1–17 (MALRGCHRLEVIFKRCI) constitute a mitochondrion transit peptide. Residues 18–74 (ASPVLHSQAGNRRSSQLAIKGVDPNSNGNSGQYQQNGEHKEKGWRRLVRFFVPFSLG) constitute a propeptide that is removed on maturation. The segment at 33 to 55 (QLAIKGVDPNSNGNSGQYQQNGE) is disordered. Over residues 42 to 53 (NSNGNSGQYQQN) the composition is skewed to low complexity. A helical membrane pass occupies residues 64–82 (LVRFFVPFSLGAAVSAAII). Short sequence motifs (IAP-binding) lie at residues 75 to 78 (AAVS) and 94 to 97 (SKMT). Residues 139 to 302 (SNGSGFIIEQ…IPIDYVKVFL (164 aa)) form a serine protease region. Active-site charge relay system residues include H157, D189, and S266. The PDZ domain maps to 325–410 (MGITMLTLTP…TLDIVILRGV (86 aa)).

This sequence belongs to the peptidase S1C family. Interacts with th/DIAP1 (via BIR 2 domain).

The protein resides in the mitochondrion intermembrane space. Its subcellular location is the mitochondrion membrane. It catalyses the reaction Cleavage of non-polar aliphatic amino-acids at the P1 position, with a preference for Val, Ile and Met. At the P2 and P3 positions, Arg is selected most strongly with a secondary preference for other hydrophilic residues.. Functionally, serine protease that shows proteolytic activity against a non-specific substrate beta-casein. Promotes or induces cell death either by direct binding to and inhibition of BIRC proteins (also called inhibitor of apoptosis proteins, IAPs), leading to an increase in caspase activity, or by a BIRC inhibition-independent, caspase-independent and serine protease activity-dependent mechanism. Can antagonize antiapoptotic activity of th/Diap1 by directly inducing the degradation of th/Diap1. The chain is Serine protease HTRA2, mitochondrial from Drosophila simulans (Fruit fly).